Here is an 847-residue protein sequence, read N- to C-terminus: MNGGGANITYASRKRRKPVQKTVKPIPAEGIKSNPSKRHRDRLNTELDRLASLLPFPQDVINKLDKLSVLRLSVSYLRAKSFFDVALKSSSADRNGGQDPCRAKFGEGLNLQEGEFLLQALNGFVLVVTVDALVFYASSTIQDYLGFQQSDVIHQSVYELIHTEDRAEFQRQLHWALNPSQCTDPGQGADETHGLPQPVYYNPDQLPPENSSFMERCFICRLRCLLDNSSGFLAMNFQGRLKFLHGQNKKGKDGSLLPPQLALFAIATPLQPPSILEIRTKNFIFRTKHKLDFTPTGCDAKGQIVLGYTEAELCMRGSGYQFIHAADMLYCAESHIRMIKTGESGLAVFRLLTKDNRWAWVQSNARFIYKNGRPDFIIATQRPLTDEEGREHLLKRNTKLPFMFTTGEAVLYEMTSPFPPIMDPLPIRPKSGTCGKDSATKPTPSKDSVHPSSLLSALMQQDESIYLYPPSSNAPFERNFFTESLNECSNWPENVASVAGGSVLKHEQIGQSQEVSPAFSGDQTVLFPDNKNCDLYNIMKNLGVDFEDIKNMQNEEFFGADFSGEVDFRDIDITDEILTYVQDSLNKSPFGSPGYQPQPATALNSSCMVQERLQLGPPQQPPCRSEQATVEPQQQLCQKMEHMQVNSMFANWSANQPVPFSEPQQDLQPYSVFTDFHTADQAFPYTAAMNTMPYTQNFTPCNQTVAPQHSRCTQLDFAMGNFDSSPYPSTSNLEDFVTCLQVPDRQTHGGNPQSAMVAPQTCYAGAVSMYQCQPGPAHTLMGQMQCEPPVPGPEAFLNKFPNGGMLNETYPADLHDINNTVASTHLPPLHHPSEARPFPDLASGRLL.

Positions 1-39 are disordered; the sequence is MNGGGANITYASRKRRKPVQKTVKPIPAEGIKSNPSKRH. Short sequence motifs (nuclear localization signal) lie at residues 13 to 16 and 37 to 42; these read RKRR and KRHRDR. A bHLH domain is found at 27-80; sequence PAEGIKSNPSKRHRDRLNTELDRLASLLPFPQDVINKLDKLSVLRLSVSYLRAK. The interval 38-66 is DNA-binding; that stretch reads RHRDRLNTELDRLASLLPFPQDVINKLDK. Required for maintaining the overall integrity of the AHR:ARNT heterodimer and its transcriptional activity stretches follow at residues 50 to 82, 117 to 125, and 264 to 266; these read LASL…AKSF, LLQALNGFV, and FAI. Residues 64 to 72 carry the Nuclear export signal motif; it reads LDKLSVLRL. Residues 120–173 form the PAS 1 domain; the sequence is ALNGFVLVVTVDALVFYASSTIQDYLGFQQSDVIHQSVYELIHTEDRAEFQRQL. The region spanning 281 to 336 is the PAS 2 domain; that stretch reads KNFIFRTKHKLDFTPTGCDAKGQIVLGYTEAELCMRGSGYQFIHAADMLYCAESHI. The region spanning 346–384 is the PAC domain; sequence LAVFRLLTKDNRWAWVQSNARFIYKNGRPDFIIATQRPL. Disordered regions lie at residues 430–452 and 825–847; these read KSGT…VHPS and HLPP…GRLL. Positions 440-452 are enriched in polar residues; sequence TKPTPSKDSVHPS.

Homodimer. Heterodimer; efficient DNA binding requires dimerization with another bHLH protein. Binds MYBBP1A. Interacts with coactivators including SRC-1, RIP140 and NOCA7, and with the corepressor SMRT. Interacts with NEDD8 and IVNS1ABP. Interacts with BMAL1. Interacts with HSP90AB1. Interacts with ARNT; the heterodimer ARNT:AHR binds to core DNA sequence 5'-TGCGTG-3' within the dioxin response element (DRE) of target gene promoters and activates their transcription. Interacts with TIPARP; leading to mono-ADP-ribosylation of AHR and subsequent inhibition of AHR. In terms of processing, mono-ADP-ribosylated, leading to inhibit transcription activator activity of AHR.

It is found in the cytoplasm. Its subcellular location is the nucleus. Ligand-activated transcription factor that enables cells to adapt to changing conditions by sensing compounds from the environment, diet, microbiome and cellular metabolism, and which plays important roles in development, immunity and cancer. Upon ligand binding, translocates into the nucleus, where it heterodimerizes with ARNT and induces transcription by binding to xenobiotic response elements (XRE). Regulates a variety of biological processes, including angiogenesis, hematopoiesis, drug and lipid metabolism, cell motility and immune modulation. Xenobiotics can act as ligands: upon xenobiotic-binding, activates the expression of multiple phase I and II xenobiotic chemical metabolizing enzyme genes (such as the CYP1A1 gene). Mediates biochemical and toxic effects of halogenated aromatic hydrocarbons. Next to xenobiotics, natural ligands derived from plants, microbiota, and endogenous metabolism are potent AHR agonists. Tryptophan (Trp) derivatives constitute an important class of endogenous AHR ligands. Acts as a negative regulator of anti-tumor immunity: indoles and kynurenic acid generated by Trp catabolism act as ligand and activate AHR, thereby promoting AHR-driven cancer cell motility and suppressing adaptive immunity. Regulates the circadian clock by inhibiting the basal and circadian expression of the core circadian component PER1. Inhibits PER1 by repressing the CLOCK-BMAL1 heterodimer mediated transcriptional activation of PER1. The heterodimer ARNT:AHR binds to core DNA sequence 5'-TGCGTG-3' within the dioxin response element (DRE) of target gene promoters and activates their transcription. The protein is Aryl hydrocarbon receptor (AHR) of Oryctolagus cuniculus (Rabbit).